Consider the following 222-residue polypeptide: LexA repressor (222 aa).

Positions 28-48 (IREIGEHMDIRSTNGVNDHLK) form a DNA-binding region, H-T-H motif. Active-site for autocatalytic cleavage activity residues include S135 and K172.

This sequence belongs to the peptidase S24 family. As to quaternary structure, homodimer.

The enzyme catalyses Hydrolysis of Ala-|-Gly bond in repressor LexA.. In terms of biological role, represses a number of genes involved in the response to DNA damage (SOS response), including recA and lexA. In the presence of single-stranded DNA, RecA interacts with LexA causing an autocatalytic cleavage which disrupts the DNA-binding part of LexA, leading to derepression of the SOS regulon and eventually DNA repair. The sequence is that of LexA repressor from Myxococcus xanthus (strain DK1622).